The following is a 450-amino-acid chain: Glutamate-1-semialdehyde 2,1-aminomutase (450 aa).

At K262 the chain carries N6-(pyridoxal phosphate)lysine.

Belongs to the class-III pyridoxal-phosphate-dependent aminotransferase family. HemL subfamily. Homodimer. The cofactor is pyridoxal 5'-phosphate.

Its subcellular location is the cytoplasm. It catalyses the reaction (S)-4-amino-5-oxopentanoate = 5-aminolevulinate. It functions in the pathway porphyrin-containing compound metabolism; protoporphyrin-IX biosynthesis; 5-aminolevulinate from L-glutamyl-tRNA(Glu): step 2/2. In Campylobacter hominis (strain ATCC BAA-381 / DSM 21671 / CCUG 45161 / LMG 19568 / NCTC 13146 / CH001A), this protein is Glutamate-1-semialdehyde 2,1-aminomutase.